A 711-amino-acid polypeptide reads, in one-letter code: Zinc finger CCCH domain-containing protein 43 (711 aa).

Residues 1–49 form a disordered region; that stretch reads MPQDDDWFWGRPTPVVVGDGETTSKPKPPVAGKTKKVEEQHPRRPGEPD. Positions 35–47 are enriched in basic and acidic residues; the sequence is KKVEEQHPRRPGE. 3 C3H1-type zinc fingers span residues 44–72, 90–118, and 157–185; these read RPGE…HPDP, RPGE…HPPR, and RPGT…HPDP. In terms of domain architecture, MIF4G spans 384 to 637; the sequence is LKTLKSILNT…GAISYLIEKE (254 aa).

The chain is Zinc finger CCCH domain-containing protein 43 from Oryza sativa subsp. japonica (Rice).